A 228-amino-acid polypeptide reads, in one-letter code: 2,3-bisphosphoglycerate-dependent phosphoglycerate mutase (228 aa).

Substrate-binding positions include 8 to 15 (RHGQSVWN), 21 to 22 (TG), Arg-60, 87 to 90 (ERHY), Lys-98, 114 to 115 (RR), and 183 to 184 (GN). The active-site Tele-phosphohistidine intermediate is His-9. Catalysis depends on Glu-87, which acts as the Proton donor/acceptor.

The protein belongs to the phosphoglycerate mutase family. BPG-dependent PGAM subfamily.

It carries out the reaction (2R)-2-phosphoglycerate = (2R)-3-phosphoglycerate. It participates in carbohydrate degradation; glycolysis; pyruvate from D-glyceraldehyde 3-phosphate: step 3/5. Catalyzes the interconversion of 2-phosphoglycerate and 3-phosphoglycerate. The chain is 2,3-bisphosphoglycerate-dependent phosphoglycerate mutase from Staphylococcus carnosus (strain TM300).